The chain runs to 144 residues: Ribonuclease VapC45 (144 aa).

The Mg(2+) site is built by Asp-7 and Asp-102.

It belongs to the PINc/VapC protein family. Mg(2+) is required as a cofactor.

Its function is as follows. Toxic component of a type II toxin-antitoxin (TA) system. An RNase. Its cognate antitoxin is VapB45. In Mycobacterium tuberculosis (strain CDC 1551 / Oshkosh), this protein is Ribonuclease VapC45.